Consider the following 379-residue polypeptide: Very late expression factor 1 (379 aa).

Residues 169-348 (VIDTILNFIN…YNIGLDETSS (180 aa)) enclose the Tyr recombinase domain. Residues Arg210, Lys239, Arg303, and His326 contribute to the active site. Tyr335 functions as the O-(3'-phospho-DNA)-tyrosine intermediate in the catalytic mechanism. Residues 346–358 (TSSEEENNNDDDD) show a composition bias toward acidic residues. Residues 346-379 (TSSEEENNNDDDDAQHNRNSSGSSGESLLYYRNE) form a disordered region. Residues 362–379 (NRNSSGSSGESLLYYRNE) are compositionally biased toward low complexity.

This sequence belongs to the 'phage' integrase family.

Plays a role in nucleocapsid assembly and serves an essential function during the final stages of the DNA packaging process. Participates in the processing of branched DNA molecules at the late stages of viral genome replication. This Lepidoptera (butterflies and moths) protein is Very late expression factor 1 (VLF-1).